The following is a 505-amino-acid chain: ATP synthase subunit beta, mitochondrial (505 aa).

184–191 contacts ATP; sequence GGAGVGKT.

The protein belongs to the ATPase alpha/beta chains family. F-type ATPases have 2 components, CF(1) - the catalytic core - and CF(0) - the membrane proton channel. CF(1) has five subunits: alpha(3), beta(3), gamma(1), delta(1), epsilon(1). CF(0) has three main subunits: a, b and c.

Its subcellular location is the mitochondrion. The protein localises to the mitochondrion inner membrane. It catalyses the reaction ATP + H2O + 4 H(+)(in) = ADP + phosphate + 5 H(+)(out). Its function is as follows. Mitochondrial membrane ATP synthase (F(1)F(0) ATP synthase or Complex V) produces ATP from ADP in the presence of a proton gradient across the membrane which is generated by electron transport complexes of the respiratory chain. F-type ATPases consist of two structural domains, F(1) - containing the extramembraneous catalytic core, and F(0) - containing the membrane proton channel, linked together by a central stalk and a peripheral stalk. During catalysis, ATP synthesis in the catalytic domain of F(1) is coupled via a rotary mechanism of the central stalk subunits to proton translocation. Subunits alpha and beta form the catalytic core in F(1). Rotation of the central stalk against the surrounding alpha(3)beta(3) subunits leads to hydrolysis of ATP in three separate catalytic sites on the beta subunits. This is ATP synthase subunit beta, mitochondrial (ATP2) from Kluyveromyces lactis (strain ATCC 8585 / CBS 2359 / DSM 70799 / NBRC 1267 / NRRL Y-1140 / WM37) (Yeast).